A 219-amino-acid chain; its full sequence is Ras-like protein 1 (219 aa).

15-22 lines the GTP pocket; it reads GDGGVGKS. An Effector region motif is present at residues 37 to 45; the sequence is YDPTIEDSY. Residues 62–66 and 121–124 contribute to the GTP site; these read DTAGQ and NKCD. Position 216 is a cysteine methyl ester (Cys-216). Cys-216 carries S-farnesyl cysteine lipidation. Positions 217 to 219 are cleaved as a propeptide — removed in mature form; that stretch reads VIC.

The protein belongs to the small GTPase superfamily. Ras family. In terms of assembly, scd1, scd2, cdc42, and ras1, in its GTP-bound state, act cooperatively to form a protein complex. In terms of processing, palmitoylated by the erf2-erf4 complex.

It localises to the cell membrane. It carries out the reaction GTP + H2O = GDP + phosphate + H(+). Alternates between an inactive form bound to GDP and an active form bound to GTP. Activated by a guanine nucleotide-exchange factor (GEF) and inactivated by a GTPase-activating protein (GAP). Participates in the process of sexual differentiation and the determination of cell shape. Essential for mating and for recognition of the mating pheromone, but not for vegetative growth. Does not regulate the intracellular cAMP level. Regulates two downstream pathways, namely the byr2/byr1/spk1 mitogen-activated protein kinase cascade and the cdc42 small G protein pathway. The former is relevant to mating and sporulation, whereas the latter is relevant to mating, cell growth and cell morphology. This Schizosaccharomyces pombe (strain 972 / ATCC 24843) (Fission yeast) protein is Ras-like protein 1 (ras1).